A 345-amino-acid chain; its full sequence is Phosphoribosylformylglycinamidine cyclo-ligase (345 aa).

Belongs to the AIR synthase family.

The protein resides in the cytoplasm. The catalysed reaction is 2-formamido-N(1)-(5-O-phospho-beta-D-ribosyl)acetamidine + ATP = 5-amino-1-(5-phospho-beta-D-ribosyl)imidazole + ADP + phosphate + H(+). It functions in the pathway purine metabolism; IMP biosynthesis via de novo pathway; 5-amino-1-(5-phospho-D-ribosyl)imidazole from N(2)-formyl-N(1)-(5-phospho-D-ribosyl)glycinamide: step 2/2. In Shewanella loihica (strain ATCC BAA-1088 / PV-4), this protein is Phosphoribosylformylglycinamidine cyclo-ligase.